Here is a 345-residue protein sequence, read N- to C-terminus: MRLVVDGFGKYLGIENGLIVVKEKGKALRKVRPEDLKQVLIIGKAAISSDAIKLLLKNRVDVVFLDFNGEILGRLSHPLIGTAKTRREQYLAYGDKRGVHLAKEFIKAKMANQMAILTNLAKARKDSNPEVAESLLKAKKEIDACLNELDGVEAEMIDKVRERLLGIEGKASKHYWDAISLVIPEEYRFNGRRGIEIGSPRYAKDIVNAMLNYGYSILLAECVKAVELAGLDPYAGFLHVDVSGRSSLAIDLMENFRQQVVDRVVLRLISYRQIKPEDCEKRNMVCQLSDNARRLLLASLLERLDSKTQYRGRNLAYSSIILLHARDVVAFLRGERRYEGFVQKW.

Residues E168, H239, and E254 each coordinate a divalent metal cation.

The protein belongs to the CRISPR-associated endonuclease Cas1 family. Forms a heterotetramer with a Cas2 homodimer. Homodimer. Requires a divalent metal cation as cofactor.

Its function is as follows. CRISPR (clustered regularly interspaced short palindromic repeat), is an adaptive immune system that provides protection against mobile genetic elements (viruses, transposable elements and conjugative plasmids). CRISPR clusters contain sequences complementary to antecedent mobile elements and target invading nucleic acids. CRISPR clusters are transcribed and processed into CRISPR RNA (crRNA). Involved in the integration of spacer DNA into the CRISPR cassette. Acts as a dsDNA and ssRNA nuclease, binds to linear and circular dsDNA and linear ssRNA and ssDNA. The sequence is that of CRISPR-associated endonuclease Cas1 1 from Archaeoglobus fulgidus (strain ATCC 49558 / DSM 4304 / JCM 9628 / NBRC 100126 / VC-16).